The primary structure comprises 155 residues: Low molecular weight phosphotyrosine protein phosphatase 1 (155 aa).

Residue Cys-9 is the Nucleophile of the active site. Arg-15 is an active-site residue. Asp-124 (proton donor) is an active-site residue.

This sequence belongs to the low molecular weight phosphotyrosine protein phosphatase family. In terms of tissue distribution, cone cells and primary pigment cells in developing pupal retina.

The protein resides in the cytoplasm. The catalysed reaction is O-phospho-L-tyrosyl-[protein] + H2O = L-tyrosyl-[protein] + phosphate. The enzyme catalyses a phosphate monoester + H2O = an alcohol + phosphate. In terms of biological role, acts on tyrosine phosphorylated proteins, low-MW aryl phosphates and natural and synthetic acyl phosphates. This is Low molecular weight phosphotyrosine protein phosphatase 1 (primo-1) from Drosophila melanogaster (Fruit fly).